Here is a 422-residue protein sequence, read N- to C-terminus: 4-hydroxy-3-methylbut-2-en-1-yl diphosphate synthase (flavodoxin) (422 aa).

[4Fe-4S] cluster-binding residues include cysteine 316, cysteine 319, cysteine 362, and glutamate 369.

This sequence belongs to the IspG family. It depends on [4Fe-4S] cluster as a cofactor.

It carries out the reaction (2E)-4-hydroxy-3-methylbut-2-enyl diphosphate + oxidized [flavodoxin] + H2O + 2 H(+) = 2-C-methyl-D-erythritol 2,4-cyclic diphosphate + reduced [flavodoxin]. It functions in the pathway isoprenoid biosynthesis; isopentenyl diphosphate biosynthesis via DXP pathway; isopentenyl diphosphate from 1-deoxy-D-xylulose 5-phosphate: step 5/6. Its function is as follows. Converts 2C-methyl-D-erythritol 2,4-cyclodiphosphate (ME-2,4cPP) into 1-hydroxy-2-methyl-2-(E)-butenyl 4-diphosphate. This chain is 4-hydroxy-3-methylbut-2-en-1-yl diphosphate synthase (flavodoxin), found in Ehrlichia canis (strain Jake).